Reading from the N-terminus, the 802-residue chain is Copper-exporting P-type ATPase (802 aa).

HMA domains follow at residues 5–70 and 72–138; these read KKTT…YGVA and ETVE…YDAS. 4 residues coordinate Cu(+): Cys16, Cys19, Cys83, and Cys86. The next 6 membrane-spanning stretches (helical) occupy residues 161 to 181, 192 to 212, 224 to 244, 256 to 276, 411 to 431, and 438 to 458; these read LIIS…HLFN, WFQF…FYVG, MDVL…YEMV, LYFE…YLEA, YFVP…ITLV, and PALV…LGLA. Asp495 functions as the 4-aspartylphosphate intermediate in the catalytic mechanism. Residues Asp690 and Asp694 each contribute to the Mg(2+) site. The next 2 helical transmembrane spans lie at 748–767 and 771–790; these read LFWA…LGLL and VAGA…ALRL.

The protein belongs to the cation transport ATPase (P-type) (TC 3.A.3) family. Type IB subfamily.

It localises to the cell membrane. The catalysed reaction is Cu(+)(in) + ATP + H2O = Cu(+)(out) + ADP + phosphate + H(+). Involved in copper export. This chain is Copper-exporting P-type ATPase (copA), found in Staphylococcus aureus (strain MW2).